The following is a 141-amino-acid chain: Large ribosomal subunit protein uL11 (141 aa).

The protein belongs to the universal ribosomal protein uL11 family. In terms of assembly, part of the ribosomal stalk of the 50S ribosomal subunit. Interacts with L10 and the large rRNA to form the base of the stalk. L10 forms an elongated spine to which L12 dimers bind in a sequential fashion forming a multimeric L10(L12)X complex. One or more lysine residues are methylated.

Functionally, forms part of the ribosomal stalk which helps the ribosome interact with GTP-bound translation factors. This chain is Large ribosomal subunit protein uL11, found in Clostridium novyi (strain NT).